A 269-amino-acid polypeptide reads, in one-letter code: Cleavage and polyadenylation specificity factor subunit 4 (269 aa).

5 consecutive C3H1-type zinc fingers follow at residues 35-61, 62-89, 90-117, 118-142, and 143-169; these read KSGAAVCEFFLKAACGKGGMCPFRHIS, GEKTVVCKHWLRGLCKKGDQCEFLHEYD, MTKMPECYFYSKFGECSNKECPFLHIDP, ESKIKDCPWYDRGFCKHGPLCRHRH, and TRRVICVNYLVGFCPEGPSCKFMHPRF. The segment at 173 to 199 is disordered; sequence MGTTEQPPLPQQTQPPAKQSNNPPLQR. Residues S200, S202, and S212 each carry the phosphoserine modification. The segment at 243–260 adopts a CCHC-type zinc-finger fold; that stretch reads VTCYKCGEKGHYANRCTK. The residue at position 267 (S267) is a Phosphoserine.

The protein belongs to the CPSF4/YTH1 family. Component of the cleavage and polyadenylation specificity factor (CPSF) complex, composed of CPSF1, CPSF2, CPSF3, CPSF4 and FIP1L1. Interacts with FIP1L1. In terms of assembly, (Microbial infection) Interacts with influenza A virus NS1 blocks processing of pre-mRNAs, thereby preventing nuclear export of host cell mRNAs.

It localises to the nucleus. Functionally, component of the cleavage and polyadenylation specificity factor (CPSF) complex that play a key role in pre-mRNA 3'-end formation, recognizing the AAUAAA signal sequence and interacting with poly(A) polymerase and other factors to bring about cleavage and poly(A) addition. CPSF4 binds RNA polymers with a preference for poly(U). The sequence is that of Cleavage and polyadenylation specificity factor subunit 4 (CPSF4) from Homo sapiens (Human).